The following is a 41-amino-acid chain: Cuticle protein 32 (41 aa).

4 tandem repeats follow at residues 17 to 20, 25 to 28, 31 to 34, and 38 to 41.

In terms of biological role, component of the cuticle of migratory locust which contains more than 100 different structural proteins. The protein is Cuticle protein 32 of Locusta migratoria (Migratory locust).